A 500-amino-acid chain; its full sequence is Aspartyl/glutamyl-tRNA(Asn/Gln) amidotransferase subunit B (500 aa).

This sequence belongs to the GatB/GatE family. GatB subfamily. As to quaternary structure, heterotrimer of A, B and C subunits.

The catalysed reaction is L-glutamyl-tRNA(Gln) + L-glutamine + ATP + H2O = L-glutaminyl-tRNA(Gln) + L-glutamate + ADP + phosphate + H(+). It carries out the reaction L-aspartyl-tRNA(Asn) + L-glutamine + ATP + H2O = L-asparaginyl-tRNA(Asn) + L-glutamate + ADP + phosphate + 2 H(+). Its function is as follows. Allows the formation of correctly charged Asn-tRNA(Asn) or Gln-tRNA(Gln) through the transamidation of misacylated Asp-tRNA(Asn) or Glu-tRNA(Gln) in organisms which lack either or both of asparaginyl-tRNA or glutaminyl-tRNA synthetases. The reaction takes place in the presence of glutamine and ATP through an activated phospho-Asp-tRNA(Asn) or phospho-Glu-tRNA(Gln). The sequence is that of Aspartyl/glutamyl-tRNA(Asn/Gln) amidotransferase subunit B from Brucella ovis (strain ATCC 25840 / 63/290 / NCTC 10512).